We begin with the raw amino-acid sequence, 95 residues long: Integration host factor subunit beta (95 aa).

This sequence belongs to the bacterial histone-like protein family. As to quaternary structure, heterodimer of an alpha and a beta chain.

Functionally, this protein is one of the two subunits of integration host factor, a specific DNA-binding protein that functions in genetic recombination as well as in transcriptional and translational control. The sequence is that of Integration host factor subunit beta from Shewanella halifaxensis (strain HAW-EB4).